We begin with the raw amino-acid sequence, 428 residues long: Glutamate-1-semialdehyde 2,1-aminomutase 2 (428 aa).

Position 267 is an N6-(pyridoxal phosphate)lysine (Lys267).

Belongs to the class-III pyridoxal-phosphate-dependent aminotransferase family. HemL subfamily. Homodimer. The cofactor is pyridoxal 5'-phosphate.

It is found in the cytoplasm. It catalyses the reaction (S)-4-amino-5-oxopentanoate = 5-aminolevulinate. The protein operates within porphyrin-containing compound metabolism; protoporphyrin-IX biosynthesis; 5-aminolevulinate from L-glutamyl-tRNA(Glu): step 2/2. The chain is Glutamate-1-semialdehyde 2,1-aminomutase 2 from Oceanobacillus iheyensis (strain DSM 14371 / CIP 107618 / JCM 11309 / KCTC 3954 / HTE831).